Here is a 770-residue protein sequence, read N- to C-terminus: Molybdenum cofactor sulfurase (770 aa).

N6-(pyridoxal phosphate)lysine is present on K243. Residue C405 is part of the active site. Positions 611-769 constitute an MOSC domain; sequence GDEVANWLCQ…LACGDPITVL (159 aa). At S726 the chain carries Phosphoserine.

The protein belongs to the class-V pyridoxal-phosphate-dependent aminotransferase family. MOCOS subfamily. Pyridoxal 5'-phosphate is required as a cofactor.

The enzyme catalyses Mo-molybdopterin + L-cysteine + AH2 = thio-Mo-molybdopterin + L-alanine + A + H2O. Its pathway is cofactor biosynthesis; molybdopterin biosynthesis. Its function is as follows. Sulfurates the molybdenum cofactor. Sulfation of molybdenum is essential for xanthine dehydrogenase (XDH) and aldehyde oxidase (ADO) enzymes in which molybdenum cofactor is liganded by 1 oxygen and 1 sulfur atom in active form. This is Molybdenum cofactor sulfurase from Drosophila grimshawi (Hawaiian fruit fly).